A 173-amino-acid chain; its full sequence is Alpha-crystallin A chain (173 aa).

M1 carries the post-translational modification N-acetylmethionine. Residues 1–63 form a required for complex formation with BFSP1 and BFSP2 region; the sequence is MDIAIQHPWF…RTVLDSGISE (63 aa). Q6 is subject to Deamidated glutamine; partial. Position 45 is a phosphoserine (S45). Q50 carries the deamidated glutamine; partial modification. The sHSP domain maps to 52 to 162; that stretch reads LFRTVLDSGI…GHSERAIPVS (111 aa). At K70 the chain carries N6-acetyllysine. Deamidated glutamine; partial is present on Q90. K99 carries the post-translational modification N6-acetyllysine. H100 contacts Zn(2+). N101 is subject to Deamidated asparagine; partial. Residues E102 and H107 each coordinate Zn(2+). At S122 the chain carries Phosphoserine. At N123 the chain carries Deamidated asparagine; partial. Residues 144–173 form a disordered region; the sequence is PKVPSGMDAGHSERAIPVSREEKPSSAPSS. Residues 153-167 are compositionally biased toward basic and acidic residues; the sequence is GHSERAIPVSREEKP. H154 provides a ligand contact to Zn(2+). O-linked (GlcNAc) serine glycosylation is present at S162.

This sequence belongs to the small heat shock protein (HSP20) family. As to quaternary structure, heteromer composed of three CRYAA and one CRYAB subunits. Inter-subunit bridging via zinc ions enhances stability, which is crucial as there is no protein turn over in the lens. Can also form homodimers and homotetramers (dimers of dimers) which serve as the building blocks of homooligomers. Within homooligomers, the zinc-binding motif is created from residues of 3 different molecules. His-100 and Glu-102 from one molecule are ligands of the zinc ion, and His-107 and His-154 residues from additional molecules complete the site with tetrahedral coordination geometry. Part of a complex required for lens intermediate filament formation composed of BFSP1, BFSP2 and CRYAA. Post-translationally, acetylation at Lys-70 may increase chaperone activity. Undergoes age-dependent proteolytical cleavage at the C-terminus.

It localises to the cytoplasm. Its subcellular location is the nucleus. Functionally, contributes to the transparency and refractive index of the lens. Acts as a chaperone, preventing aggregation of various proteins under a wide range of stress conditions. Required for the correct formation of lens intermediate filaments as part of a complex composed of BFSP1, BFSP2 and CRYAA. The polypeptide is Alpha-crystallin A chain (CRYAA) (Balaenoptera acutorostrata (Common minke whale)).